We begin with the raw amino-acid sequence, 345 residues long: Fe-S cluster assembly protein DRE2 (345 aa).

The segment at 29–163 is N-terminal SAM-like domain; that stretch reads GDSGDRTLLL…KPDYAEQEVV (135 aa). The linker stretch occupies residues 164–237; it reads PLRFGAKKVN…EDTLLTEADL (74 aa). Positions 247, 258, 261, and 263 each coordinate [2Fe-2S] cluster. Residues 247 to 263 are fe-S binding site A; the sequence is CAPQPGKKRRACKDCTC. [4Fe-4S] cluster-binding residues include C308, C311, C319, and C322. 2 short sequence motifs (cx2C motif) span residues 308 to 311 and 319 to 322; these read CNSC and CADC. The tract at residues 308–322 is fe-S binding site B; sequence CNSCYLGDAFRCADC.

The protein belongs to the anamorsin family. In terms of assembly, monomer. Interacts with TAH18. Interacts with MIA40. The cofactor is [2Fe-2S] cluster. It depends on [4Fe-4S] cluster as a cofactor.

It is found in the cytoplasm. Its subcellular location is the mitochondrion intermembrane space. Its function is as follows. Component of the cytosolic iron-sulfur (Fe-S) protein assembly (CIA) machinery required for the maturation of extramitochondrial Fe-S proteins. Part of an electron transfer chain functioning in an early step of cytosolic Fe-S biogenesis, facilitating the de novo assembly of a [4Fe-4S] cluster on the scaffold complex CFD1-NBP35. Electrons are transferred to DRE2 from NADPH via the FAD- and FMN-containing protein TAH18. TAH18-DRE2 are also required for the assembly of the diferric tyrosyl radical cofactor of ribonucleotide reductase (RNR), probably by providing electrons for reduction during radical cofactor maturation in the catalytic small subunit RNR2. The protein is Fe-S cluster assembly protein DRE2 of Podospora anserina (strain S / ATCC MYA-4624 / DSM 980 / FGSC 10383) (Pleurage anserina).